The following is a 250-amino-acid chain: tRNA (guanine-N(1)-)-methyltransferase (250 aa).

S-adenosyl-L-methionine is bound by residues G108 and L127 to L132.

This sequence belongs to the RNA methyltransferase TrmD family. In terms of assembly, homodimer.

It is found in the cytoplasm. The enzyme catalyses guanosine(37) in tRNA + S-adenosyl-L-methionine = N(1)-methylguanosine(37) in tRNA + S-adenosyl-L-homocysteine + H(+). Its function is as follows. Specifically methylates guanosine-37 in various tRNAs. This chain is tRNA (guanine-N(1)-)-methyltransferase, found in Streptococcus agalactiae serotype Ia (strain ATCC 27591 / A909 / CDC SS700).